Reading from the N-terminus, the 60-residue chain is UPF0434 protein Mfla_2088 (60 aa).

Belongs to the UPF0434 family.

In Methylobacillus flagellatus (strain ATCC 51484 / DSM 6875 / VKM B-1610 / KT), this protein is UPF0434 protein Mfla_2088.